Reading from the N-terminus, the 81-residue chain is Cytotoxin 5 (81 aa).

Positions 1–21 (MKTLLLTLVVVTIVCLDLGYT) are cleaved as a signal peptide. Cystine bridges form between C24–C42, C35–C59, C63–C74, and C75–C80.

It belongs to the three-finger toxin family. Short-chain subfamily. Type IA cytotoxin sub-subfamily. In terms of assembly, monomer in solution; Homodimer and oligomer in the presence of negatively charged lipids forming a pore with a size ranging between 20 and 30 Angstroms. Expressed by the venom gland.

It localises to the secreted. It is found in the target cell membrane. In terms of biological role, shows cytolytic activity on many different cells by forming pore in lipid membranes. In vivo, increases heart rate or kills the animal by cardiac arrest. In addition, it binds to heparin with high affinity, interacts with Kv channel-interacting protein 1 (KCNIP1) in a calcium-independent manner, and binds to integrin alpha-V/beta-3 (ITGAV/ITGB3) with moderate affinity. This is Cytotoxin 5 from Naja atra (Chinese cobra).